A 537-amino-acid polypeptide reads, in one-letter code: DEAD-box ATP-dependent RNA helicase 5 (537 aa).

The segment at 1-97 is disordered; sequence MAGQKQELPV…EDLGEGESEQ (97 aa). The stretch at 22–80 forms a coiled coil; sequence TNKKKKKSKKNKHTEENHEVEEVPQEVTNGVEEELSNKEKKKKRKREEKESEKNKKKDV. Residues 23–33 are compositionally biased toward basic residues; that stretch reads NKKKKKSKKNK. Positions 68 to 87 are enriched in basic and acidic residues; that stretch reads EEKESEKNKKKDVPEKKLEA. Positions 116 to 142 match the Q motif motif; it reads KTFAESNLPENVLDCCKTFEKPSPIQS. Positions 145-324 constitute a Helicase ATP-binding domain; that stretch reads WPFLLDGRDL…QEFMDPNPIK (180 aa). An ATP-binding site is contributed by 158–165; it reads AKTGSGKT. The DEAD box signature appears at 272 to 275; sequence DEAD. Positions 349 to 500 constitute a Helicase C-terminal domain; it reads ARDQRLIALL…VVPADLLKFG (152 aa). Ser-533 is subject to Phosphoserine.

The protein belongs to the DEAD box helicase family. DDX5/DBP2 subfamily.

Its subcellular location is the nucleus. The protein localises to the nucleolus. It carries out the reaction ATP + H2O = ADP + phosphate + H(+). Functionally, ATP-dependent RNA helicase required for 60S ribosomal subunit synthesis. Involved in efficient pre-rRNA processing, predominantly at site A3, which is necessary for the normal formation of 25S and 5.8S rRNAs. In Arabidopsis thaliana (Mouse-ear cress), this protein is DEAD-box ATP-dependent RNA helicase 5 (RH5).